The primary structure comprises 391 residues: ATP phosphoribosyltransferase regulatory subunit (391 aa).

Belongs to the class-II aminoacyl-tRNA synthetase family. HisZ subfamily. Heteromultimer composed of HisG and HisZ subunits.

Its subcellular location is the cytoplasm. It participates in amino-acid biosynthesis; L-histidine biosynthesis; L-histidine from 5-phospho-alpha-D-ribose 1-diphosphate: step 1/9. In terms of biological role, required for the first step of histidine biosynthesis. May allow the feedback regulation of ATP phosphoribosyltransferase activity by histidine. The chain is ATP phosphoribosyltransferase regulatory subunit from Bacillus licheniformis (strain ATCC 14580 / DSM 13 / JCM 2505 / CCUG 7422 / NBRC 12200 / NCIMB 9375 / NCTC 10341 / NRRL NRS-1264 / Gibson 46).